The following is a 150-amino-acid chain: Ribonuclease pancreatic delta-type (150 aa).

Positions 1-25 (MGLEKSFILFSLLVLVLGWVQPSLG) are cleaved as a signal peptide. Arg35 is a substrate binding site. His37 functions as the Proton acceptor in the catalytic mechanism. Disulfide bonds link Cys51–Cys110, Cys65–Cys121, Cys83–Cys136, and Cys90–Cys98. Substrate contacts are provided by residues 66–70 (KRVNT), Lys91, and Arg111. Catalysis depends on His145, which acts as the Proton donor.

The protein belongs to the pancreatic ribonuclease family. Monomer.

The protein resides in the secreted. The enzyme catalyses an [RNA] containing cytidine + H2O = an [RNA]-3'-cytidine-3'-phosphate + a 5'-hydroxy-ribonucleotide-3'-[RNA].. The catalysed reaction is an [RNA] containing uridine + H2O = an [RNA]-3'-uridine-3'-phosphate + a 5'-hydroxy-ribonucleotide-3'-[RNA].. In terms of biological role, endonuclease that catalyzes the cleavage of RNA on the 3' side of pyrimidine nucleotides. Acts on single-stranded and double-stranded RNA. This chain is Ribonuclease pancreatic delta-type (Rnase1d), found in Rattus norvegicus (Rat).